Reading from the N-terminus, the 31-residue chain is Cyclotide psybry B (31 aa).

The cyclopeptide (Gly-Asn) cross-link spans 1-31; it reads GFNPCGETCWNKPTCHAPGCTCSIANICVRN. Cystine bridges form between Cys-5/Cys-20, Cys-9/Cys-22, and Cys-15/Cys-28.

Post-translationally, this is a cyclic peptide.

Its function is as follows. Probably participates in a plant defense mechanism. The protein is Cyclotide psybry B of Psychotria brachyceras.